A 481-amino-acid polypeptide reads, in one-letter code: Mechanosensory protein 2 (481 aa).

Residues 1–22 (MSATMSSARNSVVSLSSNGSVK) show a composition bias toward low complexity. 2 disordered regions span residues 1-67 (MSAT…MATR) and 80-104 (SANSDDDSVKKEKQAEKDVEKGNGK). Over residues 27-38 (LVSNERSSSIQQ) the composition is skewed to polar residues. Residues 86–104 (DSVKKEKQAEKDVEKGNGK) show a composition bias toward basic and acidic residues. The chain crosses the membrane as a helical span at residues 115 to 135 (GVCGWILTILSYLLIFFTLPI). Residues 403-421 (EGGGGHGHSHGGGGGGLGS) are compositionally biased toward gly residues. The disordered stretch occupies residues 403–481 (EGGGGHGHSH…SQLDPALLIR (79 aa)). Residues 433-447 (SGPSTTTTSGRPLLR) are compositionally biased toward low complexity. Over residues 463–473 (APNQSQTSVSQ) the composition is skewed to polar residues.

Belongs to the band 7/mec-2 family. Component of a non-voltage-gated amiloride-sensitive cation channel complex (also called the degenerin channel complex) composed of at least the mec-2, mec-4, mec-6 and mec-10 subunits; the complex mediates mechanotransduction in touch cells. Interacts with mec-6 and mec-4.

The protein resides in the membrane. In terms of biological role, subunit of an amiloride-sensitive cation channel (degenerin channel complex) permeable for sodium, potassium, lithium and N-methylglucamine, and required for mechanosensory transduction (touch sensitivity). Positively regulates the activity of the putative mechanosensory transduction channel. May link the mechanosensory channel and the microtubule cytoskeleton of the touch receptor neurons. Required for the function of a set of six touch receptor neurons. This Caenorhabditis elegans protein is Mechanosensory protein 2.